The chain runs to 328 residues: DNA-directed RNA polymerase subunit alpha (328 aa).

The tract at residues 1-230 (MNKIKITPSV…QSQMEIFTND (230 aa)) is alpha N-terminal domain (alpha-NTD). The interval 243–328 (NSEIFYQPLD…ILKKIEQNKS (86 aa)) is alpha C-terminal domain (alpha-CTD).

The protein belongs to the RNA polymerase alpha chain family. Homodimer. The RNAP catalytic core consists of 2 alpha, 1 beta, 1 beta' and 1 omega subunit. When a sigma factor is associated with the core the holoenzyme is formed, which can initiate transcription.

The catalysed reaction is RNA(n) + a ribonucleoside 5'-triphosphate = RNA(n+1) + diphosphate. In terms of biological role, DNA-dependent RNA polymerase catalyzes the transcription of DNA into RNA using the four ribonucleoside triphosphates as substrates. The polypeptide is DNA-directed RNA polymerase subunit alpha (Nitratiruptor sp. (strain SB155-2)).